A 36-amino-acid polypeptide reads, in one-letter code: Photosystem I reaction center subunit VIII (36 aa).

Residues 9–29 (ILVPLVGLIFPALSMALLFIY) form a helical membrane-spanning segment.

It belongs to the PsaI family.

It is found in the plastid. The protein resides in the chloroplast thylakoid membrane. May help in the organization of the PsaL subunit. The polypeptide is Photosystem I reaction center subunit VIII (Pyropia yezoensis (Susabi-nori)).